The chain runs to 518 residues: Metalloprotease TIKI2 (518 aa).

An N-terminal signal peptide occupies residues 1 to 22 (MNCQSGLRWLVTLCAFFQVGSA). Residues 23–499 (RDTHESTRQC…SALDSAAPNP (477 aa)) lie on the Extracellular side of the membrane. N-linked (GlcNAc...) asparagine glycosylation is found at N224, N233, N282, N325, and N340. A helical membrane pass occupies residues 500-517 (TYALTCFLACLISQLLFA). Residue S518 is a topological domain, cytoplasmic.

The protein belongs to the TIKI family. Requires Mn(2+) as cofactor. It depends on Co(2+) as a cofactor.

It is found in the cell membrane. In terms of biological role, metalloprotease that acts as a negative regulator of the Wnt signaling pathway by mediating the cleavage of the N-terminal residues of a subset of Wnt proteins. Following cleavage, Wnt proteins become oxidized and form large disulfide-bond oligomers, leading to their inactivation. The protein is Metalloprotease TIKI2 (trabd2b) of Danio rerio (Zebrafish).